The sequence spans 604 residues: Sulfite reductase [NADPH] flavoprotein alpha-component (604 aa).

Residues 65–203 form the Flavodoxin-like domain; it reads VTILYGSQTG…AAGQWHADVL (139 aa). FMN is bound by residues 71 to 76, 118 to 121, and 154 to 163; these read SQTGNG, STHG, and LGDSSYEFFC. An FAD-binding FR-type domain is found at 236–453; that stretch reads QNPYSAEVLV…VEPNKHFRLP (218 aa). FAD is bound by residues threonine 324, leucine 358, 392–395, 410–412, and 425–428; these read RLYS, TVA, and GGAS. NADP(+)-binding positions include 524 to 525, 530 to 534, and aspartate 566; these read SR and KIYVQ. Tyrosine 604 provides a ligand contact to FAD.

This sequence belongs to the NADPH-dependent sulphite reductase flavoprotein subunit CysJ family. In the N-terminal section; belongs to the flavodoxin family. It in the C-terminal section; belongs to the flavoprotein pyridine nucleotide cytochrome reductase family. Alpha(8)-beta(8). The alpha component is a flavoprotein, the beta component is a hemoprotein. Requires FAD as cofactor. FMN serves as cofactor.

It catalyses the reaction hydrogen sulfide + 3 NADP(+) + 3 H2O = sulfite + 3 NADPH + 4 H(+). It participates in sulfur metabolism; hydrogen sulfide biosynthesis; hydrogen sulfide from sulfite (NADPH route): step 1/1. Its function is as follows. Component of the sulfite reductase complex that catalyzes the 6-electron reduction of sulfite to sulfide. This is one of several activities required for the biosynthesis of L-cysteine from sulfate. The flavoprotein component catalyzes the electron flow from NADPH -&gt; FAD -&gt; FMN to the hemoprotein component. The chain is Sulfite reductase [NADPH] flavoprotein alpha-component from Shewanella sp. (strain MR-7).